A 513-amino-acid polypeptide reads, in one-letter code: Glutamyl-tRNA(Gln) amidotransferase subunit A (513 aa).

Residues Lys85 and Ser160 each act as charge relay system in the active site. Ser184 functions as the Acyl-ester intermediate in the catalytic mechanism.

The protein belongs to the amidase family. GatA subfamily. In terms of assembly, heterotrimer of A, B and C subunits.

The catalysed reaction is L-glutamyl-tRNA(Gln) + L-glutamine + ATP + H2O = L-glutaminyl-tRNA(Gln) + L-glutamate + ADP + phosphate + H(+). Its function is as follows. Allows the formation of correctly charged Gln-tRNA(Gln) through the transamidation of misacylated Glu-tRNA(Gln) in organisms which lack glutaminyl-tRNA synthetase. The reaction takes place in the presence of glutamine and ATP through an activated gamma-phospho-Glu-tRNA(Gln). The polypeptide is Glutamyl-tRNA(Gln) amidotransferase subunit A (Bifidobacterium longum subsp. infantis (strain ATCC 15697 / DSM 20088 / JCM 1222 / NCTC 11817 / S12)).